The following is a 358-amino-acid chain: Putative hydrogenase expression/formation protein MJ0993 (358 aa).

3 residues coordinate Fe cation: C33, C61, and C64.

Belongs to the HypD family.

The protein is Putative hydrogenase expression/formation protein MJ0993 of Methanocaldococcus jannaschii (strain ATCC 43067 / DSM 2661 / JAL-1 / JCM 10045 / NBRC 100440) (Methanococcus jannaschii).